Consider the following 917-residue polypeptide: Calcium-activated chloride channel regulator 1 (917 aa).

The first 21 residues, 1-21 (MGSFRSSLFILVLHLLEGAQS), serve as a signal peptide directing secretion. Residues 46 to 199 (DERLIQNIKD…AIRGTNVLPQ (154 aa)) are metalloprotease domain. Residue His-156 coordinates Zn(2+). The active site involves Glu-157. 2 residues coordinate Zn(2+): His-160 and Asn-167. The 170-residue stretch at 306 to 475 (IVCLVLDKSG…NGLIDAFGAL (170 aa)) folds into the VWFA domain. N-linked (GlcNAc...) asparagine glycans are attached at residues Asn-503, Asn-772, Asn-806, Asn-812, Asn-838, and Asn-893.

It belongs to the CLCR family. In terms of processing, glycosylated. Post-translationally, the translation product is autoproteolytically cleaved by the metalloprotease domain in the endoplasmic reticulum into a N-terminal and a C-terminal products that remain physically associated with each other. The cleavage is necessary for calcium-activated chloride channel (CaCC) activation activity. As to expression, expressed in ileum, trachea, and the major salivary glands. In ileum, expressed to the crypt and villus epithelia, whereas in trachea expressed in both surface epithelium and submucosal glands.

Its subcellular location is the secreted. It localises to the extracellular space. Its function is as follows. May be involved in mediating calcium-activated chloride conductance. May play critical roles in goblet cell metaplasia, mucus hypersecretion, cystic fibrosis and AHR. May be involved in the regulation of mucus production and/or secretion by goblet cells. Involved in the regulation of tissue inflammation in the innate immune response. May play a role as a tumor suppressor. Induces MUC5AC. Induces a cAMP-dependent chloride conductance possibly through effects on CFTR in colon carcinoma cells. The protein is Calcium-activated chloride channel regulator 1 (CLCA1) of Sus scrofa (Pig).